We begin with the raw amino-acid sequence, 296 residues long: Transmembrane O-methyltransferase (296 aa).

Residues 36–56 (VGTMSPAIALAFLPLVVTLLV) traverse the membrane as a helical segment. S-adenosyl-L-methionine-binding positions include Glu142, 144–145 (GT), Ser150, Glu168, and Ser198.

Belongs to the class I-like SAM-binding methyltransferase superfamily. Cation-dependent O-methyltransferase family. In terms of assembly, interacts with LHFPL5, PCDH15, TMC1, TMC2 and TMIE. Interacts directly with TMC1. The interaction of TOMT with TMC1 and TMC2 is required for the transportation of TMC1/2 into the stereocilia of hair cells.

The protein resides in the membrane. The protein localises to the cytoplasm. Its subcellular location is the endoplasmic reticulum. The enzyme catalyses a catechol + S-adenosyl-L-methionine = a guaiacol + S-adenosyl-L-homocysteine + H(+). Its function is as follows. Catalyzes the O-methylation, and thereby the inactivation, of catecholamine neurotransmitters and catechol hormones. Required for auditory function. Component of the cochlear hair cell's mechanotransduction (MET) machinery. Involved in the assembly of the asymmetric tip-link MET complex. Required for transportation of TMC1 and TMC2 proteins into the mechanically sensitive stereocilia of the hair cells. The function in MET is independent of the enzymatic activity. The sequence is that of Transmembrane O-methyltransferase from Macaca mulatta (Rhesus macaque).